Consider the following 89-residue polypeptide: Small ribosomal subunit protein uS15 (89 aa).

The segment covering 1–21 has biased composition (basic and acidic residues); sequence MSITAERKAEVIKDNARDKGD. The segment at 1 to 26 is disordered; it reads MSITAERKAEVIKDNARDKGDTGSPE.

It belongs to the universal ribosomal protein uS15 family. Part of the 30S ribosomal subunit. Forms a bridge to the 50S subunit in the 70S ribosome, contacting the 23S rRNA.

In terms of biological role, one of the primary rRNA binding proteins, it binds directly to 16S rRNA where it helps nucleate assembly of the platform of the 30S subunit by binding and bridging several RNA helices of the 16S rRNA. Forms an intersubunit bridge (bridge B4) with the 23S rRNA of the 50S subunit in the ribosome. This chain is Small ribosomal subunit protein uS15, found in Sphingopyxis alaskensis (strain DSM 13593 / LMG 18877 / RB2256) (Sphingomonas alaskensis).